A 611-amino-acid chain; its full sequence is ANK repeat-containing protein nipk-1 (611 aa).

Residues 91–149 (NSKSKKKTENQETKEKDEEAEEKKDGPPKDDKELKMKKEKEQEDENAELDEQKKDGDLL) are a coiled coil. Disordered stretches follow at residues 92 to 167 (SKSK…SHPY), 212 to 255 (ISAS…DTSR), and 280 to 333 (TKEE…LSPR). Basic and acidic residues predominate over residues 97–131 (KTENQETKEKDEEAEEKKDGPPKDDKELKMKKEKE). Polar residues-rich tracts occupy residues 212–223 (ISASTTPDTVLS), 239–255 (ESLQ…DTSR), and 315–333 (GTCS…LSPR). 5 ANK repeats span residues 375 to 405 (DGDT…TMNE), 417 to 446 (FGET…SPNS), 452 to 482 (VGDS…RVNE), 486 to 527 (DGQT…DPTI), and 532 to 561 (TGKT…EDTF).

The protein belongs to the iASPP family. Expressed in the nervous system.

Its function is as follows. Acts downstream of the receptor complex composed of ilcr-1 and ilcr-2, which is a signaling complex that modulates neuronal activity and animal behavior in response to sensory neuron input. Mediates signaling of the complex. The sequence is that of ANK repeat-containing protein nipk-1 from Caenorhabditis elegans.